Reading from the N-terminus, the 631-residue chain is Protein FRIABLE 1 (631 aa).

Over residues 1–13 the composition is skewed to low complexity; sequence MSVGVPVNPSSSS. Positions 1–36 are disordered; that stretch reads MSVGVPVNPSSSSQLPAAPTTTTRRRVADSQEDHSH. The Cytoplasmic portion of the chain corresponds to 1 to 120; sequence MSVGVPVNPS…NMRSTTNLGR (120 aa). A compositionally biased stretch (basic and acidic residues) spans 26–36; sequence RVADSQEDHSH. A helical; Signal-anchor for type II membrane protein transmembrane segment spans residues 121-141; sequence FILTLLSILVVTFFLIVALSG. The Lumenal portion of the chain corresponds to 142–631; the sequence is GVGRRRKHVE…RPSLRAQSLR (490 aa). N-linked (GlcNAc...) asparagine glycosylation is found at asparagine 246, asparagine 329, and asparagine 364. 384 to 386 is a substrate binding site; sequence HLR. Residues asparagine 398 and asparagine 425 are each glycosylated (N-linked (GlcNAc...) asparagine).

Belongs to the glycosyltransferase GT106 family. Ubiquitous. Strong expression in young seedlings, particularly at the junction between hypocotyl and root, in emerging cotyledons, and in parts of the roots. Also detected in the inflorescence (sepals, petals, mature pollen and siliques) and rosette leaves.

Its subcellular location is the golgi apparatus membrane. The protein operates within glycan metabolism. Its function is as follows. Glycosyltransferase required for normal cell adhesion and cell wall integrity. This is Protein FRIABLE 1 from Arabidopsis thaliana (Mouse-ear cress).